Reading from the N-terminus, the 311-residue chain is Ribosomal RNA small subunit methyltransferase H (311 aa).

S-adenosyl-L-methionine contacts are provided by residues 34 to 36 (GGH), Asp-54, Phe-78, Asp-100, and Gln-107.

This sequence belongs to the methyltransferase superfamily. RsmH family.

Its subcellular location is the cytoplasm. The enzyme catalyses cytidine(1402) in 16S rRNA + S-adenosyl-L-methionine = N(4)-methylcytidine(1402) in 16S rRNA + S-adenosyl-L-homocysteine + H(+). Functionally, specifically methylates the N4 position of cytidine in position 1402 (C1402) of 16S rRNA. This Hamiltonella defensa subsp. Acyrthosiphon pisum (strain 5AT) protein is Ribosomal RNA small subunit methyltransferase H.